The primary structure comprises 143 residues: Large ribosomal subunit protein uL11 (143 aa).

It belongs to the universal ribosomal protein uL11 family. Part of the ribosomal stalk of the 50S ribosomal subunit. Interacts with L10 and the large rRNA to form the base of the stalk. L10 forms an elongated spine to which L12 dimers bind in a sequential fashion forming a multimeric L10(L12)X complex. In terms of processing, one or more lysine residues are methylated.

Forms part of the ribosomal stalk which helps the ribosome interact with GTP-bound translation factors. This chain is Large ribosomal subunit protein uL11, found in Pseudomonas fluorescens (strain SBW25).